A 289-amino-acid polypeptide reads, in one-letter code: Metal-staphylopine import system permease protein CntC (289 aa).

The next 5 membrane-spanning stretches (helical) occupy residues 13–33 (AVIA…APLV), 77–97 (LLYV…LGFL), 115–135 (VMLA…FGMG), 194–214 (IAII…GFSF), and 249–269 (IAIV…QIAI). Positions 73 to 262 (IRPSLLYVFV…IIVMAFNFLS (190 aa)) constitute an ABC transmembrane type-1 domain.

The protein belongs to the binding-protein-dependent transport system permease family. In terms of assembly, the complex is composed of two ATP-binding proteins (CntD and CntF), two transmembrane proteins (CntB and CntC) and a solute-binding protein (CntA).

The protein resides in the cell membrane. With respect to regulation, nickel/cobalt import is reduced in the presence of zinc. In terms of biological role, part of the ABC transporter complex CntABCDF (Opp1) involved in the uptake of metal in complex with the metallophore staphylopine (StP). Involved in the import of divalent metals ions such as nickel, cobalt and zinc. Probably responsible for the translocation of the substrate across the membrane. Plays a major role in nickel/cobalt import in zinc-depleted conditions. Contributes to virulence. Required for full urease activity in vitro. The chain is Metal-staphylopine import system permease protein CntC from Staphylococcus aureus (strain NCTC 8325 / PS 47).